A 327-amino-acid polypeptide reads, in one-letter code: Methionyl-tRNA formyltransferase (327 aa).

Position 111 to 114 (serine 111 to proline 114) interacts with (6S)-5,6,7,8-tetrahydrofolate.

The protein belongs to the Fmt family.

The catalysed reaction is L-methionyl-tRNA(fMet) + (6R)-10-formyltetrahydrofolate = N-formyl-L-methionyl-tRNA(fMet) + (6S)-5,6,7,8-tetrahydrofolate + H(+). In terms of biological role, attaches a formyl group to the free amino group of methionyl-tRNA(fMet). The formyl group appears to play a dual role in the initiator identity of N-formylmethionyl-tRNA by promoting its recognition by IF2 and preventing the misappropriation of this tRNA by the elongation apparatus. The chain is Methionyl-tRNA formyltransferase from Synechococcus elongatus (strain ATCC 33912 / PCC 7942 / FACHB-805) (Anacystis nidulans R2).